Consider the following 560-residue polypeptide: Glutamine--tRNA ligase (560 aa).

A 'HIGH' region motif is present at residues 36–46; the sequence is PEPNGFAHIGH. ATP contacts are provided by residues 37–39 and 43–49; these read EPN and HIGHAKA. Residues aspartate 69 and tyrosine 214 each coordinate L-glutamine. 263–264 contributes to the ATP binding site; sequence RL. Positions 270 to 274 match the 'KMSKS' region motif; the sequence is LTSKR.

The protein belongs to the class-I aminoacyl-tRNA synthetase family. As to quaternary structure, monomer.

It localises to the cytoplasm. The catalysed reaction is tRNA(Gln) + L-glutamine + ATP = L-glutaminyl-tRNA(Gln) + AMP + diphosphate. In Chromobacterium violaceum (strain ATCC 12472 / DSM 30191 / JCM 1249 / CCUG 213 / NBRC 12614 / NCIMB 9131 / NCTC 9757 / MK), this protein is Glutamine--tRNA ligase.